We begin with the raw amino-acid sequence, 503 residues long: von Willebrand factor A domain-containing protein 1 (503 aa).

Positions 1–21 (MEVRKALTCVFLTVFLCSGDA) are cleaved as a signal peptide. Residues 36–213 (DVLFLLDSSG…IIGEDLRNSI (178 aa)) form the VWFA domain. Fibronectin type-III domains lie at 218 to 324 (RAER…TVNP) and 331 to 423 (LLSS…VLPA).

Homodimer or homomultimer; disulfide-linked.

Its subcellular location is the secreted. It is found in the extracellular space. The protein localises to the extracellular matrix. The protein resides in the basement membrane. Its function is as follows. Promotes matrix assembly. Involved in the organization of skeletal muscles and in the formation of neuromuscular junctions. The protein is von Willebrand factor A domain-containing protein 1 of Danio rerio (Zebrafish).